We begin with the raw amino-acid sequence, 37 residues long: Esculentin-2JDb (37 aa).

A disulfide bridge links Cys-31 with Cys-37.

In terms of tissue distribution, expressed by the skin glands.

It is found in the secreted. Functionally, has antibacterial activity against E.coli and S.aureus strains. This is Esculentin-2JDb from Odorrana jingdongensis (Jingdong frog).